We begin with the raw amino-acid sequence, 424 residues long: Tyrosine--tRNA ligase (424 aa).

Tyr-37 is an L-tyrosine binding site. Residues 42–51 (ITADSLHVGH) carry the 'HIGH' region motif. Tyr-175 and Gln-179 together coordinate L-tyrosine. Positions 235–239 (KFGKT) match the 'KMSKS' region motif. Residue Lys-238 coordinates ATP. The 59-residue stretch at 356–414 (GNLQQLLVYSRLALSRSHAKSMIVSNSVRINNIIQNNPFYILCNRDKMYHKYTLLSRGK) folds into the S4 RNA-binding domain.

It belongs to the class-I aminoacyl-tRNA synthetase family. TyrS type 1 subfamily. Homodimer.

Its subcellular location is the cytoplasm. The enzyme catalyses tRNA(Tyr) + L-tyrosine + ATP = L-tyrosyl-tRNA(Tyr) + AMP + diphosphate + H(+). Its function is as follows. Catalyzes the attachment of tyrosine to tRNA(Tyr) in a two-step reaction: tyrosine is first activated by ATP to form Tyr-AMP and then transferred to the acceptor end of tRNA(Tyr). This is Tyrosine--tRNA ligase from Buchnera aphidicola subsp. Baizongia pistaciae (strain Bp).